Reading from the N-terminus, the 589-residue chain is Parathyroid hormone/parathyroid hormone-related peptide receptor (589 aa).

The first 28 residues, 1–28 (MGAARIAPGLALLLCCPVLSSAYALVDA), serve as a signal peptide directing secretion. The Extracellular portion of the chain corresponds to 29–188 (DDVMTKEEQI…REREVFDRLG (160 aa)). Cystine bridges form between Cys-48-Cys-117, Cys-108-Cys-148, and Cys-131-Cys-170. The interval 64 to 105 (ESDKGWASASTSGKPKKEKPSGKLHPESEEDKEVPTGSRPRG) is disordered. The segment covering 81–90 (EKPSGKLHPE) has biased composition (basic and acidic residues). N-linked (GlcNAc...) asparagine glycosylation is found at Asn-151, Asn-161, Asn-166, and Asn-176. Residues 189–209 (MIYTVGYSVSLASLTVAVLIL) form a helical membrane-spanning segment. At 210–223 (AYFRRLHCTRNYIH) the chain is on the cytoplasmic side. Residues 224–244 (MHLFLSFMLRAVSIFVKDAVL) traverse the membrane as a helical segment. At 245 to 294 (YSGTALDEAERLTEEELRAIAQAPPPPAAAAGYVGCRVAVTFFLYFLATN) the chain is on the extracellular side. A helical transmembrane segment spans residues 295 to 315 (YYWILVEGLYLHSLIFMAFFS). Over 316-318 (EKK) the chain is Cytoplasmic. A helical transmembrane segment spans residues 319-339 (YLWGFTVFGWGLPAIFVAVWV). Topologically, residues 340-360 (SVRATLANTGCWDLSSGNKKW) are extracellular. A helical transmembrane segment spans residues 361-381 (IIQVPILASIVLNFILFINIV). Residues 382–404 (RVLATKLRETNAGRCDTRQQYRK) lie on the Cytoplasmic side of the membrane. Residues 405–425 (LLKSTLVLMPLFGVHYIVFMA) traverse the membrane as a helical segment. At 426-439 (TPYTEVSGTLWQVQ) the chain is on the extracellular side. Residues 440–460 (MHYEMLFNSFQGFFVAIIYCF) traverse the membrane as a helical segment. Residues 461-589 (CNGEVQAEIK…LLQEEWETVM (129 aa)) are Cytoplasmic-facing. Residues 473–476 (WSRW) carry the Important for interaction with G proteins motif. The segment at 524 to 549 (AATTNGHPPLPGHTKSGSPALQATPP) is disordered. Thr-547 is modified (phosphothreonine).

The protein belongs to the G-protein coupled receptor 2 family. In terms of assembly, homodimer in the absence of bound ligand. Peptide hormone binding leads to dissociation of the homodimer. Post-translationally, N-glycosylated.

It is found in the cell membrane. Its function is as follows. G-protein-coupled receptor for parathyroid hormone (PTH) and for parathyroid hormone-related peptide (PTHLH). Ligand binding causes a conformation change that triggers signaling via guanine nucleotide-binding proteins (G proteins) and modulates the activity of downstream effectors, such as adenylate cyclase (cAMP). PTH1R is coupled to G(s) G alpha proteins and mediates activation of adenylate cyclase activity. PTHLH dissociates from PTH1R more rapidly than PTH; as consequence, the cAMP response induced by PTHLH decays faster than the response induced by PTH. The sequence is that of Parathyroid hormone/parathyroid hormone-related peptide receptor (PTH1R) from Bos taurus (Bovine).